Reading from the N-terminus, the 930-residue chain is RNA-binding protein 10 (930 aa).

Composition is skewed to basic and acidic residues over residues 1–14 (MEYERRGGRGDRTG) and 21–45 (RSQDDSGENRSRDHDYRDMDYRSYP). The disordered stretch occupies residues 1 to 127 (MEYERRGGRG…EDEEEEEEKA (127 aa)). Acidic residues predominate over residues 59–70 (DSSEEQSAEDSY). Phosphoserine occurs at positions 61 and 89. The span at 80–89 (RRRRRRHRHS) shows a compositional bias: basic residues. Over residues 98-111 (RDGDYRDQDYRTEQ) the composition is skewed to basic and acidic residues. The span at 112 to 125 (GEEEEEEDEEEEEE) shows a compositional bias: acidic residues. The RRM 1 domain occupies 129-209 (NIVMLRMLPQ…QKVSMHYSDP (81 aa)). The segment at 212-242 (KINEDWLCNKCGVQNFKRREKCFKCGVPKSE) adopts a RanBP2-type zinc-finger fold. Residues 300–384 (DTIILRNLNP…KTINVEFAKG (85 aa)) enclose the RRM 2 domain. K383 bears the N6-acetyllysine mark. Disordered regions lie at residues 464 to 487 (GPGMTGTKGDPAGTGPEASLEAGA), 503 to 522 (APGLYQQSAEGSSGQSTATN), 537 to 566 (ELQSPTQPSSSAFPPATSPTAPEAYSQYPV), 620 to 646 (EQSADGHKDTGASSKEGKEKKEKHKTK), and 712 to 753 (DLPK…EEKL). Residues 507–522 (YQQSAEGSSGQSTATN) are compositionally biased toward polar residues. Residues 540–562 (SPTQPSSSAFPPATSPTAPEAYS) show a composition bias toward low complexity. Positions 623–639 (ADGHKDTGASSKEGKEK) are enriched in basic and acidic residues. Phosphoserine occurs at positions 718, 723, 733, 736, and 738. The span at 743 to 753 (ERGGPEREEKL) shows a compositional bias: basic and acidic residues. The C2H2-type; atypical zinc finger occupies 759–784 (LACLLCRRQFPSKEALIRHQQLSGLH). A phosphoserine mark is found at S781, S797, and S845. Residues 818–861 (AAERREKYGIPEPPEPKRRKYGGISTASVDFEQPTRDGLGSDNI) form a disordered region. The G-patch domain occupies 858–904 (SDNIGSRMLQAMGWKEGSGLGRKKQGIVTPIEAQTRVRGSGLGARGS). R902 carries the post-translational modification Omega-N-methylarginine.

Associates with the spliceosome. Component of a large chromatin remodeling complex, at least composed of MYSM1, PCAF, RBM10 and KIF11/TRIP5.

It is found in the nucleus. Functionally, binds to ssRNA containing the consensus sequence 5'-AGGUAA-3'. May be involved in post-transcriptional processing, most probably in mRNA splicing. Binds to RNA homopolymers, with a preference for poly(G) and poly(U) and little for poly(A). May bind to specific miRNA hairpins. This is RNA-binding protein 10 from Mus musculus (Mouse).